Here is a 275-residue protein sequence, read N- to C-terminus: Bis(5'-nucleosyl)-tetraphosphatase, symmetrical (275 aa).

The protein belongs to the Ap4A hydrolase family.

The enzyme catalyses P(1),P(4)-bis(5'-adenosyl) tetraphosphate + H2O = 2 ADP + 2 H(+). Hydrolyzes diadenosine 5',5'''-P1,P4-tetraphosphate to yield ADP. The chain is Bis(5'-nucleosyl)-tetraphosphatase, symmetrical from Photorhabdus laumondii subsp. laumondii (strain DSM 15139 / CIP 105565 / TT01) (Photorhabdus luminescens subsp. laumondii).